A 92-amino-acid chain; its full sequence is Protein S100-A12 (92 aa).

EF-hand domains are found at residues 13–48 and 49–84; these read NIFHQYSVRVGHFDTLNKRELKQLITKELPKTLQNT and KDQPTIDKIFQDLDADKDGAVSFEEFVVLVSRVLKT. His16 contacts Cu cation. His16 contacts Zn(2+). Positions 19 and 24 each coordinate Ca(2+). Cu cation is bound at residue Asp26. Asp26 is a Zn(2+) binding site. Ca(2+) contacts are provided by Thr27 and Glu32. A hinge domain region spans residues 38–53; it reads TKELPKTLQNTKDQPT. Ca(2+)-binding residues include Asp62, Asp64, Asp66, and Glu73. Residues His86 and His90 each contribute to the Cu cation site. 2 residues coordinate Zn(2+): His86 and His90.

Belongs to the S-100 family. As to quaternary structure, homodimer. Homooligomer (tetramer or hexamer) in the presence of calcium, zinc and copper ions. Interacts with AGER and both calcium and zinc are essential for the interaction. Interacts with CACYBP in a calcium-dependent manner. As to expression, up-regulated in stimulated inflammatory effector cells.

Its subcellular location is the secreted. The protein localises to the cytoplasm. It localises to the cytoskeleton. The protein resides in the cell membrane. Functionally, S100A12 is a calcium-, zinc- and copper-binding protein which plays a prominent role in the regulation of inflammatory processes and immune response. Its pro-inflammatory activity involves recruitment of leukocytes, promotion of cytokine and chemokine production, and regulation of leukocyte adhesion and migration. Acts as an alarmin or a danger associated molecular pattern (DAMP) molecule and stimulates innate immune cells via binding to receptor for advanced glycation endproducts (AGER). Binding to AGER activates the MAP-kinase and NF-kappa-B signaling pathways leading to production of pro-inflammatory cytokines and up-regulation of cell adhesion molecules ICAM1 and VCAM1. Acts as a monocyte and mast cell chemoattractant. Can stimulate mast cell degranulation and activation which generates chemokines, histamine and cytokines inducing further leukocyte recruitment to the sites of inflammation. Can inhibit the activity of matrix metalloproteinases; MMP2, MMP3 and MMP9 by chelating Zn(2+) from their active sites. This chain is Protein S100-A12 (S100A12), found in Bos taurus (Bovine).